The chain runs to 144 residues: Putative pre-16S rRNA nuclease (144 aa).

The protein belongs to the YqgF nuclease family.

It localises to the cytoplasm. Could be a nuclease involved in processing of the 5'-end of pre-16S rRNA. This Oleidesulfovibrio alaskensis (strain ATCC BAA-1058 / DSM 17464 / G20) (Desulfovibrio alaskensis) protein is Putative pre-16S rRNA nuclease.